Here is a 528-residue protein sequence, read N- to C-terminus: Na(+)/H(+) antiporter NhaB (528 aa).

Helical transmembrane passes span 23 to 45 (FAIL…IAGW), 66 to 86 (PGGL…TQVL), 95 to 115 (VLLL…LLLY), 130 to 164 (VSML…FYSI), 203 to 223 (LLMH…VGEP), 241 to 261 (IRMS…CFIV), 310 to 330 (LIVG…SVII), 349 to 369 (EEAL…GVII), 390 to 410 (LVIF…VFVG), 448 to 468 (ATPN…APLI), and 475 to 495 (MVMM…LAIE).

This sequence belongs to the NhaB Na(+)/H(+) (TC 2.A.34) antiporter family.

The protein localises to the cell inner membrane. The catalysed reaction is 2 Na(+)(in) + 3 H(+)(out) = 2 Na(+)(out) + 3 H(+)(in). In terms of biological role, na(+)/H(+) antiporter that extrudes sodium in exchange for external protons. The chain is Na(+)/H(+) antiporter NhaB from Shewanella amazonensis (strain ATCC BAA-1098 / SB2B).